Reading from the N-terminus, the 340-residue chain is MMHQMLNKKDSATHSTLPYLNTSISWGVVPTDSVANRRGSAESLSLKVDSRPGHIQTTKQISFQDQDSSSTQSTGQSYTEVASSGDDNPSRQISFSAKSGSEITQRKGFASNPKQGSMTGFPNIHFAPAQANFSFHYADPHYGGLLAATYLPQAPTCNPQMVSMIPGRVPLPAELTETDPVFVNAKQYHAIMRRRQQRAKLEAQNKLIRARKPYLHESRHVHALKRPRGSGGRFLNTKKLLQESEQAAAREQEQDKLGQQVNRKTNMSRFEAHMLQNNKDRSSTTSGSDITSVSDGADIFGHTEFQFSGFPTPINRAMLVHGQSNDMHGGGDMHHFSVHI.

Positions 43–116 (SLSLKVDSRP…KGFASNPKQG (74 aa)) are disordered. The span at 60 to 77 (QISFQDQDSSSTQSTGQS) shows a compositional bias: low complexity. Positions 78-103 (YTEVASSGDDNPSRQISFSAKSGSEI) are enriched in polar residues. The short motif at 182-205 (FVNAKQYHAIMRRRQQRAKLEAQN) is the Subunit association domain (SAD) element. Positions 212-237 (KPYLHESRHVHALKRPRGSGGRFLNT) form a DNA-binding region, NFYA/HAP2-type.

This sequence belongs to the NFYA/HAP2 subunit family. In terms of assembly, heterotrimeric transcription factor composed of three components, NF-YA, NF-YB and NF-YC. NF-YB and NF-YC must interact and dimerize for NF-YA association and DNA binding. In terms of tissue distribution, ubiquitous.

The protein resides in the nucleus. In terms of biological role, stimulates the transcription of various genes by recognizing and binding to a CCAAT motif in promoters. The chain is Nuclear transcription factor Y subunit A-3 (NFYA3) from Arabidopsis thaliana (Mouse-ear cress).